We begin with the raw amino-acid sequence, 240 residues long: MMGVLKSAIGDMLMTFSWVVLSATFGIQTAAIISAGDFQAITWAPLVILTSLIFVYVSIFTVIFGSASFNPTGSAAFYVAGVPGDTLFSLAIRLPAQAIGAAGGALAIMEFIPEKYKHMIGGPSLQVDVHTGAIAETILSFGITFAVLLIILRGPRRLLAKTFLLALATISFVVAGSKYTGPAMNPAIAFGWAYMYSSHNTWDHIYVYWISSFVGALSAALLFRSIFPPPRPQKKKQKKA.

2 helical membrane passes run 13-33 and 44-64; these read LMTF…AAII and APLV…TVIF. The NPA 1 signature appears at 70–72; sequence NPT. The next 3 membrane-spanning stretches (helical) occupy residues 89 to 109, 132 to 152, and 163 to 183; these read SLAI…LAIM, GAIA…LIIL, and FLLA…TGPA. The NPA 2 signature appears at 185 to 187; it reads NPA. A helical transmembrane segment spans residues 203-223; sequence DHIYVYWISSFVGALSAALLF.

Belongs to the MIP/aquaporin (TC 1.A.8) family. SIP (TC 1.A.8.10) subfamily. As to expression, expressed in roots and above ground. Expressed in elongating regions of the root tips, trichome cells of the rosette leaves, vascular tissues of the flower petals, stigma, stamens (anthers and filaments), pollen and the top and bottom (receptacle) of siliques.

The protein localises to the endoplasmic reticulum membrane. Its function is as follows. Water channel required to facilitate the transport of water across cell membrane. The sequence is that of Aquaporin SIP1-1 (SIP1-1) from Arabidopsis thaliana (Mouse-ear cress).